The primary structure comprises 297 residues: MNRKLSIFSAFVTFTMMIVLLMGGTVTKTDSGNGCGTDWPLCHGELIPTNPSVETMIEYSHRAVTGVVGLLIIALCLWTLVAFKDRLDIKIFAFLAFIFMLIQSIVGAGAVVWQQSDLVMALHFGISLISFASLLILTILIMERSGQEFRESVPAFLRKLLYGLLIYTLIVVYTGAFVRHVGATYACVGWPVCSQPTMTFEAWVQMIHRILAGLLFFYTLFVHYTAIRLKHRTSRTGMLFATFFISCQVATGAWIVLGGHATYVPLLHAFLITCYFGVISYLAYHAFRTRKKDSRLR.

The Cytoplasmic portion of the chain corresponds to 1–6 (MNRKLS). The chain crosses the membrane as a helical span at residues 7-27 (IFSAFVTFTMMIVLLMGGTVT). The Extracellular portion of the chain corresponds to 28–62 (KTDSGNGCGTDWPLCHGELIPTNPSVETMIEYSHR). The cysteines at positions 35 and 42 are disulfide-linked. Glu-58 is an active-site residue. A heme o-binding site is contributed by His-61. Residues 63–83 (AVTGVVGLLIIALCLWTLVAF) traverse the membrane as a helical segment. The Cytoplasmic portion of the chain corresponds to 84-90 (KDRLDIK). Residues 91 to 111 (IFAFLAFIFMLIQSIVGAGAV) form a helical membrane-spanning segment. The Extracellular segment spans residues 112–121 (VWQQSDLVMA). A helical transmembrane segment spans residues 122–142 (LHFGISLISFASLLILTILIM). A heme o-binding site is contributed by His-123. Over 143–160 (ERSGQEFRESVPAFLRKL) the chain is Cytoplasmic. Residues 161 to 181 (LYGLLIYTLIVVYTGAFVRHV) form a helical membrane-spanning segment. At 182–201 (GATYACVGWPVCSQPTMTFE) the chain is on the extracellular side. Cys-187 and Cys-193 are joined by a disulfide. Residues 202–222 (AWVQMIHRILAGLLFFYTLFV) form a helical membrane-spanning segment. Position 208 (His-208) interacts with heme b. Residues 223–236 (HYTAIRLKHRTSRT) lie on the Cytoplasmic side of the membrane. The helical transmembrane segment at 237–257 (GMLFATFFISCQVATGAWIVL) threads the bilayer. Topologically, residues 258 to 262 (GGHAT) are extracellular. A helical membrane pass occupies residues 263-283 (YVPLLHAFLITCYFGVISYLA). His-268 is a binding site for heme b. Over 284–297 (YHAFRTRKKDSRLR) the chain is Cytoplasmic.

The protein belongs to the COX15/CtaA family. Type 1 subfamily. Interacts with CtaB. The cofactor is heme b.

The protein resides in the cell membrane. It carries out the reaction Fe(II)-heme o + 2 A + H2O = Fe(II)-heme a + 2 AH2. It participates in porphyrin-containing compound metabolism; heme A biosynthesis; heme A from heme O: step 1/1. In terms of biological role, catalyzes the conversion of heme O to heme A by two successive hydroxylations of the methyl group at C8. The first hydroxylation forms heme I, the second hydroxylation results in an unstable dihydroxymethyl group, which spontaneously dehydrates, resulting in the formyl group of heme A. This chain is Heme A synthase, found in Exiguobacterium sibiricum (strain DSM 17290 / CCUG 55495 / CIP 109462 / JCM 13490 / 255-15).